The following is a 210-amino-acid chain: Na(+)-translocating NADH-quinone reductase subunit D (210 aa).

Helical transmembrane passes span 14–34 (PIIS…ALAV), 42–62 (LVMT…ISMI), 72–92 (IIVQ…VLQA), 103–123 (VFVG…AYAM), 131–151 (FMDG…VGFV), and 178–198 (NGLL…IWII).

This sequence belongs to the NqrDE/RnfAE family. In terms of assembly, composed of six subunits; NqrA, NqrB, NqrC, NqrD, NqrE and NqrF.

Its subcellular location is the cell inner membrane. The enzyme catalyses a ubiquinone + n Na(+)(in) + NADH + H(+) = a ubiquinol + n Na(+)(out) + NAD(+). Its function is as follows. NQR complex catalyzes the reduction of ubiquinone-1 to ubiquinol by two successive reactions, coupled with the transport of Na(+) ions from the cytoplasm to the periplasm. NqrA to NqrE are probably involved in the second step, the conversion of ubisemiquinone to ubiquinol. In Shewanella loihica (strain ATCC BAA-1088 / PV-4), this protein is Na(+)-translocating NADH-quinone reductase subunit D.